We begin with the raw amino-acid sequence, 378 residues long: Glutamate 5-kinase (378 aa).

Lys-14 lines the ATP pocket. Residues Ser-54, Asp-141, and Asn-153 each coordinate substrate. Residue 173–174 (SD) participates in ATP binding. Residues 279–356 (AGRLTVDAGA…DEISAILGYD (78 aa)) form the PUA domain.

It belongs to the glutamate 5-kinase family.

It is found in the cytoplasm. The catalysed reaction is L-glutamate + ATP = L-glutamyl 5-phosphate + ADP. It participates in amino-acid biosynthesis; L-proline biosynthesis; L-glutamate 5-semialdehyde from L-glutamate: step 1/2. Functionally, catalyzes the transfer of a phosphate group to glutamate to form L-glutamate 5-phosphate. The protein is Glutamate 5-kinase of Brucella canis (strain ATCC 23365 / NCTC 10854 / RM-666).